The primary structure comprises 232 residues: Fibrillarin-like rRNA/tRNA 2'-O-methyltransferase (232 aa).

S-adenosyl-L-methionine-binding positions include Thr87–Thr88, Glu105–Phe106, Asp130–Ala131, and Asp150–Gln153.

Belongs to the methyltransferase superfamily. Fibrillarin family. In terms of assembly, interacts with nop5. Component of box C/D small ribonucleoprotein (sRNP) particles that contain rpl7ae, FlpA and nop5, plus a guide RNA.

Functionally, involved in pre-rRNA and tRNA processing. Utilizes the methyl donor S-adenosyl-L-methionine to catalyze the site-specific 2'-hydroxyl methylation of ribose moieties in rRNA and tRNA. Site specificity is provided by a guide RNA that base pairs with the substrate. Methylation occurs at a characteristic distance from the sequence involved in base pairing with the guide RNA. The sequence is that of Fibrillarin-like rRNA/tRNA 2'-O-methyltransferase from Methanococcus maripaludis (strain C7 / ATCC BAA-1331).